The primary structure comprises 271 residues: Formamidopyrimidine-DNA glycosylase (271 aa).

Pro2 serves as the catalytic Schiff-base intermediate with DNA. Catalysis depends on Glu3, which acts as the Proton donor. Lys57 (proton donor; for beta-elimination activity) is an active-site residue. Residues His90, Arg109, and Lys151 each contribute to the DNA site. Residues 236–270 (HVYGRGGKTCTQCGHMLSEIKLGQRATVFCSLCQQ) form an FPG-type zinc finger. The active-site Proton donor; for delta-elimination activity is Arg260.

This sequence belongs to the FPG family. In terms of assembly, monomer. The cofactor is Zn(2+).

The catalysed reaction is Hydrolysis of DNA containing ring-opened 7-methylguanine residues, releasing 2,6-diamino-4-hydroxy-5-(N-methyl)formamidopyrimidine.. It catalyses the reaction 2'-deoxyribonucleotide-(2'-deoxyribose 5'-phosphate)-2'-deoxyribonucleotide-DNA = a 3'-end 2'-deoxyribonucleotide-(2,3-dehydro-2,3-deoxyribose 5'-phosphate)-DNA + a 5'-end 5'-phospho-2'-deoxyribonucleoside-DNA + H(+). In terms of biological role, involved in base excision repair of DNA damaged by oxidation or by mutagenic agents. Acts as a DNA glycosylase that recognizes and removes damaged bases. Has a preference for oxidized purines, such as 7,8-dihydro-8-oxoguanine (8-oxoG). Has AP (apurinic/apyrimidinic) lyase activity and introduces nicks in the DNA strand. Cleaves the DNA backbone by beta-delta elimination to generate a single-strand break at the site of the removed base with both 3'- and 5'-phosphates. In Shewanella pealeana (strain ATCC 700345 / ANG-SQ1), this protein is Formamidopyrimidine-DNA glycosylase.